A 580-amino-acid chain; its full sequence is Putative multidrug export ATP-binding/permease protein YgaD (580 aa).

Topologically, residues 1–17 are cytoplasmic; the sequence is MGVMKRYMQFVKPYKKQ. The helical transmembrane segment at 18 to 38 threads the bilayer; it reads IFVTVLIGIVKFSIPLALPLL. The ABC transmembrane type-1 domain occupies 19-307; it reads FVTVLIGIVK…LINSSTTLTQ (289 aa). Topologically, residues 39–57 are extracellular; that stretch reads LKYVVDDIIQGGGTASDKT. Residues 58–78 traverse the membrane as a helical segment; that stretch reads TSLFTIMAIMFALFLILRPPV. Residues 79–135 lie on the Cytoplasmic side of the membrane; sequence EYYRQYFAQWTASKVLYDIRAKLFDHIQKLSLRFYANTRTGEVISRVINDVEQTKDF. Residues 136 to 156 traverse the membrane as a helical segment; that stretch reads VITGLMNIWLDMLTILIVISI. The Extracellular segment spans residues 157–163; it reads MLTLDVK. The chain crosses the membrane as a helical span at residues 164–184; sequence LTLISIVLFPLYGISVKYFYG. Residues 185–243 lie on the Cytoplasmic side of the membrane; that stretch reads RLRKLTRERSQALAQVQGHLHERIQGMPVIRSFAIEDHEQAQFNEKNGHFLDKAIRHTN. Residues 244–263 form a helical membrane-spanning segment; sequence WNAKTFAVVNTITDLAPLIV. The Extracellular segment spans residues 264 to 268; the sequence is IACAG. The helical transmembrane segment at 269–288 threads the bilayer; the sequence is YFVINGPLTVGTMVAFVGYI. Residues 289–580 lie on the Cytoplasmic side of the membrane; that stretch reads DRMYNPVRRL…KHLFTIQNLN (292 aa). In terms of domain architecture, ABC transporter spans 341–576; the sequence is VEFQNVSFQY…ESQYKHLFTI (236 aa). An ATP-binding site is contributed by 375–382; it reads GMSGGGKS.

Belongs to the ABC transporter superfamily. Homodimer.

The protein resides in the cell membrane. In terms of biological role, may be involved in multidrug export. Transmembrane domains (TMD) form a pore in the cell membrane and the ATP-binding domain (NBD) is responsible for energy generation. In Bacillus subtilis (strain 168), this protein is Putative multidrug export ATP-binding/permease protein YgaD (ygaD).